The chain runs to 544 residues: MSIFIGGAWPYANGSLHLGHIASLLPGDILARYYRSKGENVLYVSGSDCNGTPIAIRAKQEGVTAKEIADQYHEEFQRCFRSLGFTYDCYTRTDSEHHHETVQNVFLRLLEEGHIYKKIVEQAYCETCTQFLPDRYVEGICPHCHEAARGDQCDACSAILDPLDLLEKKCKLCGSTPSVQETEHFYFALHTFQEQIKRAVEIAKQTGTWRDNAIQLTERYVKEGLLDRAVSRDLPIGVPIPVEGYEDKKIYVWIEAVTGYYSASKHWAEETGKDDQEFWDSEAKTYYVHGKDNIPFHSVIWPAVLLGIGEEAIPRHIVSNEYLTVEKRKLSTSKNWAVWVPDILERYDPDSIRYFLTVNAPENRDTDFSWREFIYSHNSELLGAYGNFVNRTLKFIEKYYGGIVPKRSIEVELKDKVEGLYKHVGEAIEQTKFKVALETIFDAVRFANKYFDEKQPWKQREDDPVSCEETIYNCVYLIANFANLLEPFLPFSSERVRNTLSIVKRNWEPQNTLPSRIDSVQPLFERIDVKQIEHEIEKLYGAVK.

Residues 10 to 20 (PYANGSLHLGH) carry the 'HIGH' region motif. C141, C144, C153, and C156 together coordinate Zn(2+). The 'KMSKS' region signature appears at 329-333 (KLSTS). T332 serves as a coordination point for ATP.

This sequence belongs to the class-I aminoacyl-tRNA synthetase family. MetG type 1 subfamily. As to quaternary structure, monomer. Zn(2+) serves as cofactor.

It localises to the cytoplasm. It carries out the reaction tRNA(Met) + L-methionine + ATP = L-methionyl-tRNA(Met) + AMP + diphosphate. Its function is as follows. Is required not only for elongation of protein synthesis but also for the initiation of all mRNA translation through initiator tRNA(fMet) aminoacylation. The chain is Methionine--tRNA ligase 2 from Bacillus cereus (strain ATCC 14579 / DSM 31 / CCUG 7414 / JCM 2152 / NBRC 15305 / NCIMB 9373 / NCTC 2599 / NRRL B-3711).